Consider the following 172-residue polypeptide: Fimbrial-like protein FimF (172 aa).

A signal peptide spans 1-21 (MILRRVFIAIGCVLFSPLSQA). Residues cysteine 41 and cysteine 81 are joined by a disulfide bond.

It belongs to the fimbrial protein family.

It is found in the fimbrium. The chain is Fimbrial-like protein FimF (fimF) from Salmonella typhimurium (strain LT2 / SGSC1412 / ATCC 700720).